We begin with the raw amino-acid sequence, 110 residues long: ATP-dependent Clp protease adapter protein ClpS (110 aa).

Belongs to the ClpS family. As to quaternary structure, binds to the N-terminal domain of the chaperone ClpA.

Its function is as follows. Involved in the modulation of the specificity of the ClpAP-mediated ATP-dependent protein degradation. The sequence is that of ATP-dependent Clp protease adapter protein ClpS from Bartonella henselae (strain ATCC 49882 / DSM 28221 / CCUG 30454 / Houston 1) (Rochalimaea henselae).